The following is a 1581-amino-acid chain: Laminin subunit gamma-3 (1581 aa).

The first 28 residues, 1–28 (MAVSRVLSLLATVASMALVIQETHFAAG), serve as a signal peptide directing secretion. The Laminin N-terminal domain occupies 40–279 (RAQRCLPEFE…AVSDFSVGGR (240 aa)). Residue Asn-128 is glycosylated (N-linked (GlcNAc...) asparagine). Cystine bridges form between Cys-280-Cys-289, Cys-282-Cys-299, Cys-301-Cys-310, Cys-313-Cys-333, Cys-336-Cys-345, Cys-338-Cys-361, Cys-364-Cys-373, Cys-376-Cys-389, Cys-392-Cys-404, Cys-394-Cys-410, Cys-412-Cys-421, Cys-424-Cys-436, Cys-439-Cys-450, Cys-441-Cys-457, Cys-459-Cys-468, and Cys-471-Cys-486. 4 Laminin EGF-like domains span residues 280–335 (CKCN…ECLP), 336–391 (CNCS…PCQP), 392–438 (CDCH…GCRP), and 439–488 (CACN…GCSS). Asn-304 carries N-linked (GlcNAc...) asparagine glycosylation. Residue Asn-337 is glycosylated (N-linked (GlcNAc...) asparagine). The Laminin EGF-like 5; first part domain maps to 489 to 498 (CFCYGHSKVC). The Laminin IV type A domain maps to 508–684 (HIRSDFRHGA…LAPPASWVET (177 aa)). Asn-640 is a glycosylation site (N-linked (GlcNAc...) asparagine). In terms of domain architecture, Laminin EGF-like 5; second part spans 685–718 (CLCPQGYTGQFCEFCALGYKREIPHGGPYANCIP). Intrachain disulfides connect Cys-719–Cys-727, Cys-721–Cys-734, Cys-736–Cys-745, Cys-748–Cys-764, Cys-767–Cys-775, Cys-769–Cys-786, Cys-789–Cys-798, Cys-801–Cys-819, Cys-822–Cys-836, Cys-824–Cys-843, Cys-846–Cys-855, Cys-858–Cys-875, Cys-878–Cys-891, Cys-880–Cys-898, Cys-900–Cys-909, Cys-912–Cys-925, Cys-928–Cys-940, Cys-930–Cys-947, Cys-949–Cys-958, Cys-961–Cys-973, Cys-976–Cys-988, Cys-978–Cys-994, Cys-996–Cys-1005, and Cys-1008–Cys-1021. 6 consecutive Laminin EGF-like domains span residues 719–766 (CTCN…DCQP), 767–821 (CPCP…PCRR), 822–877 (CQCS…KCAP), 878–927 (CSCD…GCQS), 928–975 (CKCH…GCRD), and 976–1024 (CRCS…CQEC). An N-linked (GlcNAc...) asparagine glycan is attached at Asn-849. Asn-991 carries an N-linked (GlcNAc...) asparagine glycan. A domain II and I region spans residues 1025–1581 (PTCYALVKEE…LSSLPENCAS (557 aa)). Coiled coils occupy residues 1029 to 1046 (ALVKEEAAKLKARLMLME) and 1112 to 1153 (VHCA…LASL). Asn-1162 and Asn-1196 each carry an N-linked (GlcNAc...) asparagine glycan. Residues 1208 to 1231 (RVASEAQQELEDRYQEVQAAQTAL) are a coiled coil. Asn-1320 is a glycosylation site (N-linked (GlcNAc...) asparagine). Residues 1382–1413 (KRKTKQAERMLGNAASLSSSTKKKSKEAELMS) form a disordered region. 2 coiled-coil regions span residues 1438–1468 (ASQTQATLRRASRLLLTSEAHKQELEEAKQV) and 1510–1575 (AQTL…LSSL). N-linked (GlcNAc...) asparagine glycosylation occurs at Asn-1514.

Laminin is a complex glycoprotein, consisting of three different polypeptide chains (alpha, beta, gamma), which are bound to each other by disulfide bonds into a cross-shaped molecule comprising one long and three short arms with globules at each end. Gamma-3 is a subunit of laminin-12 (laminin-213), laminin-14 (laminin-423) and laminin-15 (laminin-523). Strongly expressed in capillaries and arterioles of kidney as well as in interstitial Leydig cells of testis.

The protein resides in the secreted. It localises to the extracellular space. It is found in the extracellular matrix. The protein localises to the basement membrane. Its function is as follows. Binding to cells via a high affinity receptor, laminin is thought to mediate the attachment, migration and organization of cells into tissues during embryonic development by interacting with other extracellular matrix components. This chain is Laminin subunit gamma-3 (Lamc3), found in Mus musculus (Mouse).